Consider the following 83-residue polypeptide: Alpha-neurotoxin NTX-3 (83 aa).

An N-terminal signal peptide occupies residues 1-21; the sequence is MKTLLLTLLVVTIVCLDLGYT. Disulfide bonds link C24-C45, C38-C62, C64-C75, and C76-C81.

Belongs to the three-finger toxin family. Short-chain subfamily. Type I alpha-neurotoxin sub-subfamily. In terms of tissue distribution, expressed by the venom gland.

It localises to the secreted. Its function is as follows. Binds to muscle nicotinic acetylcholine receptor (nAChR) and inhibit acetylcholine from binding to the receptor, thereby impairing neuromuscular transmission. The protein is Alpha-neurotoxin NTX-3 of Naja sputatrix (Malayan spitting cobra).